The sequence spans 442 residues: Exodeoxyribonuclease 7 large subunit (442 aa).

This sequence belongs to the XseA family. Heterooligomer composed of large and small subunits.

The protein resides in the cytoplasm. The catalysed reaction is Exonucleolytic cleavage in either 5'- to 3'- or 3'- to 5'-direction to yield nucleoside 5'-phosphates.. Functionally, bidirectionally degrades single-stranded DNA into large acid-insoluble oligonucleotides, which are then degraded further into small acid-soluble oligonucleotides. This chain is Exodeoxyribonuclease 7 large subunit, found in Rickettsia bellii (strain OSU 85-389).